Here is a 396-residue protein sequence, read N- to C-terminus: MSLSWWRAGAAKKRMDDDESLLVKQQQQQCVALIVGVTGLVGNSLAEMLPLPDTPGGPWKVYGVARRARPSWNEDQPMTYISCDVSNTGEVEAKLSPLSDVTHIFYATWTSRSTEEENCEANGKMLKNVLDAMIPNCPNLKHICLQTGRFHYVASVVDWKINGSHDTPLTEDLPRLKTNNFYYTQEDILLEEVKRKEGLTWSVHRPGTIFGFSPYSMMNLVGTLCVYAAICKQEGAVLRFPGCKGAWDGHSDCADADLIAEQQIWAALDPHAKNQAFNVSNGDLFKWKHLWKVLADQFGVECGDYEEGQQLRLQDVMKDKGPVWDKIVAENGLSNTKLEDVGKWWFSDTILWNECRLDSMNKSKEHGFLGFRNSKNCFLYWIHKVKAYNLVPSTYT.

NADP(+) is bound by residues 38–40, 66–67, 84–85, 108–109, Gln146, Tyr182, Ile209, and 216–218; these read TGL, RR, DV, TW, and SMM. Residue Tyr182 is part of the active site.

It belongs to the short-chain dehydrogenases/reductases (SDR) family.

The enzyme catalyses (S)-8-oxocitronellyl enol + NADP(+) = (6E)-8-oxogeranial + NADPH + H(+). The catalysed reaction is (S)-8-oxocitronellyl enol + NAD(+) = (6E)-8-oxogeranial + NADH + H(+). Its function is as follows. Iridoid synthase that catalyzes the first step in generation of the iridoid ring scaffold using the linear monoterpene (6E)-8-oxogeranial as substrate. Iridoids comprise a large family of distinctive bicyclic monoterpenes that possess a wide range of pharmacological activities, including anticancer, anti-inflammatory, antifungal and antibacterial activities. Catalyzes the conversion of the linear monoterpene (6E)-8-oxogeranial to (S)-8-oxocitronellyl enol, a precursor of nepetalactones, which are metabolites that are both insect-repellent and have euphoric effect in cats. The protein is (S)-8-oxocitronellyl enol synthase ISY2 of Nepeta racemosa (Catmint).